We begin with the raw amino-acid sequence, 763 residues long: Xaa-Pro dipeptidyl-peptidase (763 aa).

Active-site charge relay system residues include Ser348, Asp468, and His498.

Belongs to the peptidase S15 family. Homodimer.

Its subcellular location is the cytoplasm. The catalysed reaction is Hydrolyzes Xaa-Pro-|- bonds to release unblocked, N-terminal dipeptides from substrates including Ala-Pro-|-p-nitroanilide and (sequentially) Tyr-Pro-|-Phe-Pro-|-Gly-Pro-|-Ile.. Functionally, removes N-terminal dipeptides sequentially from polypeptides having unsubstituted N-termini provided that the penultimate residue is proline. The chain is Xaa-Pro dipeptidyl-peptidase from Lactococcus lactis subsp. cremoris (strain SK11).